Reading from the N-terminus, the 81-residue chain is Small ribosomal subunit protein bS16 (81 aa).

The protein belongs to the bacterial ribosomal protein bS16 family.

This is Small ribosomal subunit protein bS16 from Caldicellulosiruptor bescii (strain ATCC BAA-1888 / DSM 6725 / KCTC 15123 / Z-1320) (Anaerocellum thermophilum).